The following is a 436-amino-acid chain: Eukaryotic peptide chain release factor subunit 1-1 (436 aa).

Belongs to the eukaryotic release factor 1 family. Heterodimer of two subunits, one of which binds GTP.

It localises to the cytoplasm. In terms of biological role, directs the termination of nascent peptide synthesis (translation) in response to the termination codons UAA, UAG and UGA. Modulates plant growth and development. The sequence is that of Eukaryotic peptide chain release factor subunit 1-1 (ERF1-1) from Arabidopsis thaliana (Mouse-ear cress).